The chain runs to 328 residues: GTPase Obg (328 aa).

The Obg domain occupies tyrosine 2–valine 160. Positions alanine 161–lysine 326 constitute an OBG-type G domain. Residues glycine 167–serine 174, phenylalanine 192–isoleucine 196, aspartate 213–glycine 216, asparagine 280–aspartate 283, and serine 307–tyrosine 309 contribute to the GTP site. Residues serine 174 and threonine 194 each coordinate Mg(2+).

Belongs to the TRAFAC class OBG-HflX-like GTPase superfamily. OBG GTPase family. In terms of assembly, monomer. Mg(2+) is required as a cofactor.

It is found in the cytoplasm. An essential GTPase which binds GTP, GDP and possibly (p)ppGpp with moderate affinity, with high nucleotide exchange rates and a fairly low GTP hydrolysis rate. Plays a role in control of the cell cycle, stress response, ribosome biogenesis and in those bacteria that undergo differentiation, in morphogenesis control. The protein is GTPase Obg of Borreliella afzelii (strain PKo) (Borrelia afzelii).